A 589-amino-acid chain; its full sequence is DNA ligase (589 aa).

Glutamate 250 is a binding site for ATP. The active-site N6-AMP-lysine intermediate is the lysine 252. ATP is bound by residues arginine 257, arginine 272, glutamate 302, phenylalanine 342, arginine 417, and lysine 423.

This sequence belongs to the ATP-dependent DNA ligase family. Mg(2+) is required as a cofactor.

The enzyme catalyses ATP + (deoxyribonucleotide)n-3'-hydroxyl + 5'-phospho-(deoxyribonucleotide)m = (deoxyribonucleotide)n+m + AMP + diphosphate.. Functionally, DNA ligase that seals nicks in double-stranded DNA during DNA replication, DNA recombination and DNA repair. This chain is DNA ligase, found in Cenarchaeum symbiosum (strain A).